We begin with the raw amino-acid sequence, 414 residues long: Signal recognition particle receptor FtsY (414 aa).

GTP contacts are provided by residues 216–223, 298–302, and 362–365; these read GVNGVGKT, DTAGR, and TKLD.

Belongs to the GTP-binding SRP family. FtsY subfamily. In terms of assembly, part of the signal recognition particle protein translocation system, which is composed of SRP and FtsY. SRP is a ribonucleoprotein composed of Ffh and a 4.5S RNA molecule.

It localises to the cell inner membrane. It is found in the cytoplasm. The catalysed reaction is GTP + H2O = GDP + phosphate + H(+). In terms of biological role, involved in targeting and insertion of nascent membrane proteins into the cytoplasmic membrane. Acts as a receptor for the complex formed by the signal recognition particle (SRP) and the ribosome-nascent chain (RNC). Interaction with SRP-RNC leads to the transfer of the RNC complex to the Sec translocase for insertion into the membrane, the hydrolysis of GTP by both Ffh and FtsY, and the dissociation of the SRP-FtsY complex into the individual components. This Haemophilus influenzae (strain ATCC 51907 / DSM 11121 / KW20 / Rd) protein is Signal recognition particle receptor FtsY.